Reading from the N-terminus, the 413-residue chain is Probable cysteine desulfurase (413 aa).

The residue at position 229 (Lys229) is an N6-(pyridoxal phosphate)lysine. Cys368 serves as the catalytic Cysteine persulfide intermediate.

The protein belongs to the class-V pyridoxal-phosphate-dependent aminotransferase family. Csd subfamily. Pyridoxal 5'-phosphate serves as cofactor.

The enzyme catalyses (sulfur carrier)-H + L-cysteine = (sulfur carrier)-SH + L-alanine. Functionally, catalyzes the removal of elemental sulfur and selenium atoms from L-cysteine, L-cystine, L-selenocysteine, and L-selenocystine to produce L-alanine. The protein is Probable cysteine desulfurase (csd) of Staphylococcus aureus (strain Mu50 / ATCC 700699).